The primary structure comprises 78 residues: Large ribosomal subunit protein bL28 (78 aa).

This sequence belongs to the bacterial ribosomal protein bL28 family.

This chain is Large ribosomal subunit protein bL28, found in Legionella pneumophila (strain Paris).